The sequence spans 312 residues: Urease accessory protein UreD (312 aa).

Positions 1–15 (MLAEQFTDKNKHAEQ) are enriched in basic and acidic residues. Residues 1 to 24 (MLAEQFTDKNKHAEQELSPGSSAV) are disordered.

The protein belongs to the UreD family. As to quaternary structure, ureD, UreF and UreG form a complex that acts as a GTP-hydrolysis-dependent molecular chaperone, activating the urease apoprotein by helping to assemble the nickel containing metallocenter of UreC. The UreE protein probably delivers the nickel.

The protein resides in the cytoplasm. Its function is as follows. Required for maturation of urease via the functional incorporation of the urease nickel metallocenter. The polypeptide is Urease accessory protein UreD (Hahella chejuensis (strain KCTC 2396)).